The chain runs to 421 residues: Glutamyl-tRNA reductase (421 aa).

Residues 49–52 (TCNR), Ser109, 114–116 (EAQ), and Gln120 each bind substrate. Residue Cys50 is the Nucleophile of the active site. 189–194 (GAGEMC) lines the NADP(+) pocket.

This sequence belongs to the glutamyl-tRNA reductase family. In terms of assembly, homodimer.

It carries out the reaction (S)-4-amino-5-oxopentanoate + tRNA(Glu) + NADP(+) = L-glutamyl-tRNA(Glu) + NADPH + H(+). The protein operates within porphyrin-containing compound metabolism; protoporphyrin-IX biosynthesis; 5-aminolevulinate from L-glutamyl-tRNA(Glu): step 1/2. Its function is as follows. Catalyzes the NADPH-dependent reduction of glutamyl-tRNA(Glu) to glutamate 1-semialdehyde (GSA). This chain is Glutamyl-tRNA reductase, found in Magnetococcus marinus (strain ATCC BAA-1437 / JCM 17883 / MC-1).